The sequence spans 407 residues: Probable protein S-acyltransferase 9 (407 aa).

2 helical membrane passes run 28 to 48 (WSIP…SVFV) and 62 to 82 (GHVF…LLFL). The region spanning 136-179 (KYCDTCMLYRPPRCSHCSICNNCVERFDHHCPWRNYRYFFMFVS) is the DHHC domain. Cys166 serves as the catalytic S-palmitoyl cysteine intermediate. 2 helical membrane-spanning segments follow: residues 174 to 194 (FFMF…MSAL) and 217 to 237 (AVML…LTGF). The tract at residues 300–407 (LATTWERPEE…RSYAAAEEGR (108 aa)) is disordered. Over residues 346 to 356 (DTAHHKIDIDQ) the composition is skewed to basic and acidic residues.

Belongs to the DHHC palmitoyltransferase family. Mainly expressed in seeds.

The protein resides in the cell membrane. It carries out the reaction L-cysteinyl-[protein] + hexadecanoyl-CoA = S-hexadecanoyl-L-cysteinyl-[protein] + CoA. In terms of biological role, palmitoyl acyltransferase. The protein is Probable protein S-acyltransferase 9 (PAT09) of Arabidopsis thaliana (Mouse-ear cress).